The sequence spans 753 residues: MLPRVNKRSNCIAKKTSNRLISAVSLAIASLCISQSALADGMPKTNTFWWPEQLNLQPLRQNDAKSNPLGGDFNYADAFKTLNLANVKSDIKALLTSSQDWWPADYGHYGPFFVRMAWHSTGTYRMSDGRGGGAGGQQRFEPLNSWPDNVSLDKARRLLWPIKQKYGRSLSWADLMVLTGNVAMESMGFTIYGFAGGREDDFEPDLVYWGPEKKWLGGNERYSGERKLEEPLAAVQMGLIYVNPEGPNGNHDPISAAADIRDVFARMAMNDEETVALIAGGHTFGKAHGAHKPDECLDPAPAGATIEEQGLGWKNKCGKGNAEDTITSGLEGAWSVSPTQWTMQYLDNLFGFEWVETQSPAGATQWIPKDNAGANLVPDAHVKSKRHAPIMFTTDLALKEDPQYRKIAERFHANPKEFELAFSKAWFKLTHRDMGPRARYVGDESPTDDFLWQDPIPSVDYSLIDKRDIQHLKTKLLDGDVTPAQLVKTAWAAAASFRATDMRGGVNGARIQLAPQKNWEVNNPDELNTVLMFLNKVKKDFNDGQSGNKQVSLADLIVLGGAAAIEHAASKNDFDVEVPFIPGRSDATQAQTEVESFAVLEPKADGFRNYYAQGNTLSPVEMLVDKANTLDLSVPEMSVLVAGLRVMNINADGSDRGVLTDNPGTLNNDFFVNLLDMSTRWEKAKDQQDLYLGIDRKSNKQRWSASSVDLIFGSNSELRAVAEVYASDDAHQQFVDDFVNAWTKVMTLDRFDL.

Residues 1-39 (MLPRVNKRSNCIAKKTSNRLISAVSLAIASLCISQSALA) form the signal peptide. The tryptophyl-tyrosyl-methioninium (Trp-Tyr) (with M-267) cross-link spans 118–241 (WHSTGTYRMS…LAAVQMGLIY (124 aa)). Residue histidine 119 is the Proton acceptor of the active site. The segment at residues 241–267 (YVNPEGPNGNHDPISAAADIRDVFARM) is a cross-link (tryptophyl-tyrosyl-methioninium (Tyr-Met) (with W-118)). Histidine 282 lines the heme b pocket.

This sequence belongs to the peroxidase family. Peroxidase/catalase subfamily. Homodimer or homotetramer. Heme b is required as a cofactor. In terms of processing, formation of the three residue Trp-Tyr-Met cross-link is important for the catalase, but not the peroxidase activity of the enzyme.

The catalysed reaction is H2O2 + AH2 = A + 2 H2O. It carries out the reaction 2 H2O2 = O2 + 2 H2O. Its function is as follows. Bifunctional enzyme with both catalase and broad-spectrum peroxidase activity. The protein is Catalase-peroxidase of Pseudoalteromonas atlantica (strain T6c / ATCC BAA-1087).